A 298-amino-acid polypeptide reads, in one-letter code: Bifunctional protein FolD (298 aa).

NADP(+)-binding positions include 165–167 (GRS), S190, and I231.

The protein belongs to the tetrahydrofolate dehydrogenase/cyclohydrolase family. In terms of assembly, homodimer.

It catalyses the reaction (6R)-5,10-methylene-5,6,7,8-tetrahydrofolate + NADP(+) = (6R)-5,10-methenyltetrahydrofolate + NADPH. The enzyme catalyses (6R)-5,10-methenyltetrahydrofolate + H2O = (6R)-10-formyltetrahydrofolate + H(+). Its pathway is one-carbon metabolism; tetrahydrofolate interconversion. Catalyzes the oxidation of 5,10-methylenetetrahydrofolate to 5,10-methenyltetrahydrofolate and then the hydrolysis of 5,10-methenyltetrahydrofolate to 10-formyltetrahydrofolate. The protein is Bifunctional protein FolD of Prochlorococcus marinus subsp. pastoris (strain CCMP1986 / NIES-2087 / MED4).